A 262-amino-acid chain; its full sequence is Shikimate dehydrogenase (NADP(+)) (262 aa).

Shikimate-binding positions include 15–17 (SRS) and Thr-62. Catalysis depends on Lys-66, which acts as the Proton acceptor. Glu-78 is an NADP(+) binding site. Shikimate is bound by residues Asn-87 and Asp-102. Residues 126 to 130 (GAGGA), 150 to 155 (NRTLAR), and Met-214 contribute to the NADP(+) site. Position 216 (Tyr-216) interacts with shikimate. Residue Gly-236 coordinates NADP(+).

It belongs to the shikimate dehydrogenase family. In terms of assembly, homodimer.

The catalysed reaction is shikimate + NADP(+) = 3-dehydroshikimate + NADPH + H(+). It functions in the pathway metabolic intermediate biosynthesis; chorismate biosynthesis; chorismate from D-erythrose 4-phosphate and phosphoenolpyruvate: step 4/7. Involved in the biosynthesis of the chorismate, which leads to the biosynthesis of aromatic amino acids. Catalyzes the reversible NADPH linked reduction of 3-dehydroshikimate (DHSA) to yield shikimate (SA). The protein is Shikimate dehydrogenase (NADP(+)) of Acinetobacter baumannii (strain AB0057).